We begin with the raw amino-acid sequence, 853 residues long: G-type lectin S-receptor-like serine/threonine-protein kinase SRK (853 aa).

A signal peptide spans 1–31 (MRGELPNKHHSYTFFVFLFFFLILFPDLSIS). Residues 32-441 (VNTLSATESL…FGERRTIRGK (410 aa)) are Extracellular-facing. The region spanning 34 to 154 (TLSATESLTI…KINESDEFLW (121 aa)) is the Bulb-type lectin domain. N-linked (GlcNAc...) asparagine glycosylation is found at asparagine 46, asparagine 120, asparagine 147, and asparagine 243. One can recognise an EGF-like; atypical domain in the interval 293-329 (PKDTCDLYGICGPYAYCDMSTSPTCNCIKGFQPLSPQ). 4 disulfide bridges follow: cysteine 297–cysteine 309, cysteine 303–cysteine 317, cysteine 378–cysteine 403, and cysteine 382–cysteine 388. The PAN domain maps to 348–428 (CGEDRFFRLM…DGQDLFVRLA (81 aa)). The N-linked (GlcNAc...) asparagine glycan is linked to asparagine 387. The helical transmembrane segment at 442 to 462 (IIGLIIGISLMLVLSFIIYCF) threads the bilayer. Over 463–853 (WKKKQKRARA…QITVSVINAR (391 aa)) the chain is Cytoplasmic. In terms of domain architecture, Protein kinase spans 524-802 (FSDSNILGRG…PKMSSVVLML (279 aa)). ATP is bound by residues 530-538 (LGRGGFGIV) and lysine 552. Serine 558 carries the phosphoserine modification. The interval 613–631 (TQSSNKLNWQTRFSIINGI) is caM-binding. The active-site Proton acceptor is aspartate 650. Phosphoserine is present on residues serine 654 and serine 667. A Phosphothreonine modification is found at threonine 684. Positions 807–838 (GEIPQPKRPGYCVGRSSLDTADSSSSTKRDSE) are disordered. Residues 822-832 (SSLDTADSSSS) show a composition bias toward low complexity. Serine 831 carries the phosphoserine modification.

The protein belongs to the protein kinase superfamily. Ser/Thr protein kinase family.

The protein localises to the cell membrane. It catalyses the reaction L-seryl-[protein] + ATP = O-phospho-L-seryl-[protein] + ADP + H(+). It carries out the reaction L-threonyl-[protein] + ATP = O-phospho-L-threonyl-[protein] + ADP + H(+). Functionally, female specificity determinant of self-incompatibility. This is G-type lectin S-receptor-like serine/threonine-protein kinase SRK (SRK) from Arabidopsis thaliana (Mouse-ear cress).